We begin with the raw amino-acid sequence, 217 residues long: RNA chaperone ProQ (217 aa).

The disordered stretch occupies residues 105–166; that stretch reads EAKARVQAQR…PREEQHTPVS (62 aa). The span at 121 to 131 shows a compositional bias: basic residues; sequence KRERKPRPTTP. Basic and acidic residues predominate over residues 132 to 162; it reads RRKEGAERKPRAQKPVEKAPKTVKAPREEQH.

The protein belongs to the ProQ family.

It is found in the cytoplasm. Its function is as follows. RNA chaperone with significant RNA binding, RNA strand exchange and RNA duplexing activities. May regulate ProP activity through an RNA-based, post-transcriptional mechanism. The sequence is that of RNA chaperone ProQ from Escherichia coli O8 (strain IAI1).